The following is a 574-amino-acid chain: Sulfate adenylyltransferase (574 aa).

The segment at 1-169 is N-terminal; the sequence is MANPPHGGVL…IEAINKLNHY (169 aa). Positions 170–394 are catalytic; it reads DYVALRYTPA…LRESSPPRHT (225 aa). Glutamine 197 serves as a coordination point for sulfate. Residues 197 to 200 and 291 to 294 contribute to the ATP site; these read QTRN and GRDH. Active-site residues include threonine 198, arginine 199, and asparagine 200. Residue arginine 199 coordinates sulfate. Alanine 295 lines the sulfate pocket. Valine 333 provides a ligand contact to ATP. The tract at residues 395–574 is allosteric regulation domain; adenylyl-sulfate kinase-like; sequence QGFTIFLTGY…LETEGFFDRS (180 aa). Residues 434–437, arginine 451, 477–478, and arginine 516 each bind 3'-phosphoadenylyl sulfate; these read DTVR and IA.

The protein in the N-terminal section; belongs to the sulfate adenylyltransferase family. This sequence in the C-terminal section; belongs to the APS kinase family. Homohexamer. Dimer of trimers.

It localises to the cytoplasm. It carries out the reaction sulfate + ATP + H(+) = adenosine 5'-phosphosulfate + diphosphate. It functions in the pathway sulfur metabolism; hydrogen sulfide biosynthesis; sulfite from sulfate: step 1/3. With respect to regulation, allosterically inhibited by 3'-phosphoadenosine 5'-phosphosulfate (PAPS). Its function is as follows. Catalyzes the first intracellular reaction of sulfate assimilation, forming adenosine-5'-phosphosulfate (APS) from inorganic sulfate and ATP. Plays an important role in sulfate activation as a component of the biosynthesis pathway of sulfur-containing amino acids. This is Sulfate adenylyltransferase from Aspergillus fumigatus (strain ATCC MYA-4609 / CBS 101355 / FGSC A1100 / Af293) (Neosartorya fumigata).